The primary structure comprises 274 residues: MGTLSVNQNKLQKRLRRLAGEAITDYNMIEDGDKVMVCLSGGKDSYTMLDVLLHLQKVAPITFEIVAVNMDQKQPGFPEHVLPAYLKELGVEYHIVEKDTYSVVKELVPEGKTTCSLCSRLRRGTLYTFADEIGATKMALGHHRDDIVETFFLNMFFNGALKGMPPKLRADDGRNVVIRPLAYCSERDIQAYSDMKAFPIIPCNLCGSQENLQRQVVKDMLVEWERKHPGRTESIFRALQNVAPSQLADRNLFDFTSLKIDENATPRFLDVLNI.

The PP-loop motif motif lies at 40 to 45 (SGGKDS). The [4Fe-4S] cluster site is built by Cys115, Cys118, and Cys206.

The protein belongs to the TtcA family. Homodimer. The cofactor is Mg(2+). It depends on [4Fe-4S] cluster as a cofactor.

It localises to the cytoplasm. The catalysed reaction is cytidine(32) in tRNA + S-sulfanyl-L-cysteinyl-[cysteine desulfurase] + AH2 + ATP = 2-thiocytidine(32) in tRNA + L-cysteinyl-[cysteine desulfurase] + A + AMP + diphosphate + H(+). It participates in tRNA modification. Functionally, catalyzes the ATP-dependent 2-thiolation of cytidine in position 32 of tRNA, to form 2-thiocytidine (s(2)C32). The sulfur atoms are provided by the cysteine/cysteine desulfurase (IscS) system. In Pseudomonas putida (strain ATCC 47054 / DSM 6125 / CFBP 8728 / NCIMB 11950 / KT2440), this protein is tRNA-cytidine(32) 2-sulfurtransferase.